A 377-amino-acid chain; its full sequence is Chaperone protein DnaJ (377 aa).

Positions 5 to 69 (EYYDRLGVSK…QKRAAYDQYG (65 aa)) constitute a J domain. The CR-type zinc-finger motif lies at 133–215 (GTEKEVHYNR…CHGTGHEKQS (83 aa)). Cys-146, Cys-149, Cys-163, Cys-166, Cys-189, Cys-192, Cys-203, and Cys-206 together coordinate Zn(2+). CXXCXGXG motif repeat units lie at residues 146 to 153 (CHTCNGSG), 163 to 170 (CSKCHGSG), 189 to 196 (CDVCHGTG), and 203 to 210 (CPTCHGTG).

This sequence belongs to the DnaJ family. Homodimer. It depends on Zn(2+) as a cofactor.

It is found in the cytoplasm. Functionally, participates actively in the response to hyperosmotic and heat shock by preventing the aggregation of stress-denatured proteins and by disaggregating proteins, also in an autonomous, DnaK-independent fashion. Unfolded proteins bind initially to DnaJ; upon interaction with the DnaJ-bound protein, DnaK hydrolyzes its bound ATP, resulting in the formation of a stable complex. GrpE releases ADP from DnaK; ATP binding to DnaK triggers the release of the substrate protein, thus completing the reaction cycle. Several rounds of ATP-dependent interactions between DnaJ, DnaK and GrpE are required for fully efficient folding. Also involved, together with DnaK and GrpE, in the DNA replication of plasmids through activation of initiation proteins. This Streptococcus mutans serotype c (strain ATCC 700610 / UA159) protein is Chaperone protein DnaJ.